The following is a 534-amino-acid chain: CTP synthase (534 aa).

The interval M1 to L265 is amidoligase domain. A CTP-binding site is contributed by S12. S12 serves as a coordination point for UTP. G13–I18 provides a ligand contact to ATP. Position 53 (Y53) interacts with L-glutamine. D70 contributes to the ATP binding site. Residues D70 and E140 each coordinate Mg(2+). Residues D147 to E149, K186 to Q191, and K222 contribute to the CTP site. UTP is bound by residues K186–Q191 and K222. Residues K289–E530 enclose the Glutamine amidotransferase type-1 domain. L-glutamine is bound at residue G352. C379 (nucleophile; for glutamine hydrolysis) is an active-site residue. L-glutamine is bound by residues L380–Q383, E403, and R460. Catalysis depends on residues H503 and E505.

The protein belongs to the CTP synthase family. As to quaternary structure, homotetramer.

It carries out the reaction UTP + L-glutamine + ATP + H2O = CTP + L-glutamate + ADP + phosphate + 2 H(+). It catalyses the reaction L-glutamine + H2O = L-glutamate + NH4(+). The enzyme catalyses UTP + NH4(+) + ATP = CTP + ADP + phosphate + 2 H(+). The protein operates within pyrimidine metabolism; CTP biosynthesis via de novo pathway; CTP from UDP: step 2/2. With respect to regulation, allosterically activated by GTP, when glutamine is the substrate; GTP has no effect on the reaction when ammonia is the substrate. The allosteric effector GTP functions by stabilizing the protein conformation that binds the tetrahedral intermediate(s) formed during glutamine hydrolysis. Inhibited by the product CTP, via allosteric rather than competitive inhibition. Its function is as follows. Catalyzes the ATP-dependent amination of UTP to CTP with either L-glutamine or ammonia as the source of nitrogen. Regulates intracellular CTP levels through interactions with the four ribonucleotide triphosphates. In Methanosarcina acetivorans (strain ATCC 35395 / DSM 2834 / JCM 12185 / C2A), this protein is CTP synthase.